The chain runs to 162 residues: Phenazine biosynthesis protein PhzA1 (162 aa).

The protein belongs to the PhzA/PhzB family.

It functions in the pathway antibiotic biosynthesis; phenazine biosynthesis. Functionally, involved in the biosynthesis of the antibiotic phenazine, a nitrogen-containing heterocyclic molecule. PhzA1 (operon phzA1B1C1E1F1G1) has a role in the biosynthesis of the phenazine during planktonic growth. The chain is Phenazine biosynthesis protein PhzA1 from Pseudomonas aeruginosa (strain ATCC 15692 / DSM 22644 / CIP 104116 / JCM 14847 / LMG 12228 / 1C / PRS 101 / PAO1).